Here is a 103-residue protein sequence, read N- to C-terminus: Cyclotide vibi-K (103 aa).

Residues 1–9 (AAFALPAFA) form the signal peptide. The propeptide occupies 10-69 (SFEKDVITPSVLEAVLNRKAPLSNIMMENDAILNVIANVKTVISNPVLEEALLKTNHGVN). Residues 70 to 99 (GIPCGESCVWIPCLTSAVGCPCKSKVCYRN) constitute a cross-link (cyclopeptide (Gly-Asn)). 3 disulfide bridges follow: C73–C89, C77–C91, and C82–C96. Residues 100–103 (SLDN) constitute a propeptide that is removed on maturation.

In terms of processing, this is a cyclic peptide.

Functionally, probably participates in a plant defense mechanism. The sequence is that of Cyclotide vibi-K from Viola biflora (Yellow wood violet).